The following is a 379-amino-acid chain: Alcohol dehydrogenase class-P (379 aa).

Position 2 is an N-acetylserine (Ser2). Position 47 (Cys47) interacts with Zn(2+). Residue Thr49 participates in an alcohol binding. Position 49 (Thr49) interacts with NAD(+). Zn(2+) is bound by residues Asp50, His69, Glu70, Cys99, Cys102, Cys105, Cys113, and Cys177. His69 is a binding site for an alcohol. Positions 206 and 226 each coordinate NAD(+). Ser229 bears the Phosphoserine mark. NAD(+) contacts are provided by Arg231, Thr272, Val295, Val297, Thr320, Phe322, and Arg372.

The protein belongs to the zinc-containing alcohol dehydrogenase family. Class-P subfamily. In terms of assembly, homodimer. The cofactor is Zn(2+). In terms of processing, glutathionylated. Root specific. Also detected in etiolated seedlings and leaves in cold conditions.

Its subcellular location is the cytoplasm. The catalysed reaction is a primary alcohol + NAD(+) = an aldehyde + NADH + H(+). It carries out the reaction a secondary alcohol + NAD(+) = a ketone + NADH + H(+). It catalyses the reaction ethanol + NAD(+) = acetaldehyde + NADH + H(+). Alcohol dehydrogenase activity show inverse correlation with the decreasing availability of oxygen. Slightly repressed by thiol-modifying agents N-ethylmaleimide (NEM) and 5,5-dithio-bis-(2-nitrobenzoic acid) (DTNB), as well as by methyl methanethiosulfonate (MMTS) in a dose-dependent manner. Inhibited by hydrogen peroxide H(2)O(2). Alcohol dehydrogenase catalyzing the reduction of toxic aldehydes to the corresponding alcohols. Mostly active on ethanol (EtOH), but exhibits broad substrate selectivity for primary and secondary alcohols (e.g. cinnamyl alcohol, octanol, geraniol, butanol, propyl alcohol, pentanol, isopentanol, ethylene glycol, isopropanol, methanol and tertiary butyl alcohol). Also catalyzes the reverse reaction to convert allyl alcohol to highly toxic acryl-aldehyde. Required for survival and acclimation in hypoxic conditions, especially in roots. Not able to catalyze NADH-dependent degradation of S-nitrosoglutathione (GSNO). In Arabidopsis thaliana (Mouse-ear cress), this protein is Alcohol dehydrogenase class-P.